We begin with the raw amino-acid sequence, 348 residues long: MANITAALVKELREKTGAGVMDAKKALVEVEGDMGKAIELLREKGMAKAAKKADRVAAEGLTGVYVDGNVAAIVEVNAETDFVAKNAQFVDLVNETAKVIAEGKPANNEEALALKTAAGDTLEAAYVNATATIGEKISFRRFALVEKADKQVFGAYQHNGGKIGVITVLEGENTDEALAKQLAMHVAAMNPSVLSYKELSEEFIHDELAQMNHKIEQDNESRAMVDKPALPLLKYGSKGQLTDEVVAQAEEDIKAELKAEGKPEKIWDKIIPGKMARFFLDNTKVDQQYTLLSQVYIMDDSKTVEAYMESVNGKVISFVRFEVGEGIEKAANDFENEVAATMAAALNK.

An involved in Mg(2+) ion dislocation from EF-Tu region spans residues 80–83; it reads TDFV.

This sequence belongs to the EF-Ts family.

The protein localises to the cytoplasm. Its function is as follows. Associates with the EF-Tu.GDP complex and induces the exchange of GDP to GTP. It remains bound to the aminoacyl-tRNA.EF-Tu.GTP complex up to the GTP hydrolysis stage on the ribosome. The polypeptide is Elongation factor Ts (Streptococcus mutans serotype c (strain ATCC 700610 / UA159)).